The sequence spans 1407 residues: DNA-directed RNA polymerase subunit beta' (1407 aa).

Positions 70, 72, 85, and 88 each coordinate Zn(2+). 3 residues coordinate Mg(2+): D460, D462, and D464. Residues C814, C888, C895, and C898 each contribute to the Zn(2+) site. K972 carries the N6-acetyllysine modification.

Belongs to the RNA polymerase beta' chain family. In terms of assembly, the RNAP catalytic core consists of 2 alpha, 1 beta, 1 beta' and 1 omega subunit. When a sigma factor is associated with the core the holoenzyme is formed, which can initiate transcription. Mg(2+) is required as a cofactor. Requires Zn(2+) as cofactor.

It catalyses the reaction RNA(n) + a ribonucleoside 5'-triphosphate = RNA(n+1) + diphosphate. In terms of biological role, DNA-dependent RNA polymerase catalyzes the transcription of DNA into RNA using the four ribonucleoside triphosphates as substrates. This chain is DNA-directed RNA polymerase subunit beta', found in Escherichia coli O6:H1 (strain CFT073 / ATCC 700928 / UPEC).